The following is a 392-amino-acid chain: tRNA(Met) cytidine acetate ligase (392 aa).

ATP is bound by residues 7-20 (VVEY…HQLH), Gly-101, Asn-162, and 187-188 (RI).

This sequence belongs to the TmcAL family.

The protein localises to the cytoplasm. The catalysed reaction is cytidine(34) in elongator tRNA(Met) + acetate + ATP = N(4)-acetylcytidine(34) in elongator tRNA(Met) + AMP + diphosphate. Its function is as follows. Catalyzes the formation of N(4)-acetylcytidine (ac(4)C) at the wobble position of elongator tRNA(Met), using acetate and ATP as substrates. First activates an acetate ion to form acetyladenylate (Ac-AMP) and then transfers the acetyl group to tRNA to form ac(4)C34. This is tRNA(Met) cytidine acetate ligase from Listeria welshimeri serovar 6b (strain ATCC 35897 / DSM 20650 / CCUG 15529 / CIP 8149 / NCTC 11857 / SLCC 5334 / V8).